The sequence spans 60 residues: Large ribosomal subunit protein bL32 (60 aa).

Basic residues predominate over residues 1 to 23 (MAKHPVPKKKTSKARRDARRSHH). The tract at residues 1–28 (MAKHPVPKKKTSKARRDARRSHHALTPP) is disordered.

This sequence belongs to the bacterial ribosomal protein bL32 family. As to quaternary structure, part of the 50S ribosomal subunit.

Functionally, found on the solvent side of the large subunit. The sequence is that of Large ribosomal subunit protein bL32 (rpmF) from Thermus thermophilus (strain ATCC BAA-163 / DSM 7039 / HB27).